A 631-amino-acid polypeptide reads, in one-letter code: Extracellular metalloproteinase mep (631 aa).

Residues 1–19 form the signal peptide; that stretch reads MHGLRLVCSIGTLPLVILA. Positions 20-241 are excised as a propeptide; sequence YPAASLHTTS…VHGVVDYVAD (222 aa). N-linked (GlcNAc...) asparagine glycans are attached at residues asparagine 282, asparagine 332, and asparagine 364. Histidine 425 contributes to the Zn(2+) binding site. Glutamate 426 is a catalytic residue. Position 429 (histidine 429) interacts with Zn(2+). Asparagine 470 and asparagine 505 each carry an N-linked (GlcNAc...) asparagine glycan.

The protein belongs to the peptidase M36 family. Zn(2+) serves as cofactor.

It localises to the secreted. Functionally, secreted metalloproteinase that allows assimilation of proteinaceous substrates. The chain is Extracellular metalloproteinase mep (mep) from Aspergillus niger (strain ATCC MYA-4892 / CBS 513.88 / FGSC A1513).